We begin with the raw amino-acid sequence, 103 residues long: ATP synthase subunit c (103 aa).

The next 3 membrane-spanning stretches (helical) occupy residues 3 to 23 (FLALLCLGMVGFAFGAEVSGL), 30 to 50 (SIAGAVIGLGIAALGGAIGMG), and 74 to 94 (MFIALALIEAQVIYTLVLALI).

This sequence belongs to the ATPase C chain family. In terms of assembly, F-type ATPases have 2 components, F(1) - the catalytic core - and F(0) - the membrane proton channel. F(1) has five subunits: alpha(3), beta(3), gamma(1), delta(1), epsilon(1). F(0) has three main subunits: a(1), b(2) and c(10-14). The alpha and beta chains form an alternating ring which encloses part of the gamma chain. F(1) is attached to F(0) by a central stalk formed by the gamma and epsilon chains, while a peripheral stalk is formed by the delta and b chains.

The protein localises to the cell inner membrane. Its function is as follows. F(1)F(0) ATP synthase produces ATP from ADP in the presence of a proton or sodium gradient. F-type ATPases consist of two structural domains, F(1) containing the extramembraneous catalytic core and F(0) containing the membrane proton channel, linked together by a central stalk and a peripheral stalk. During catalysis, ATP synthesis in the catalytic domain of F(1) is coupled via a rotary mechanism of the central stalk subunits to proton translocation. Key component of the F(0) channel; it plays a direct role in translocation across the membrane. A homomeric c-ring of between 10-14 subunits forms the central stalk rotor element with the F(1) delta and epsilon subunits. This chain is ATP synthase subunit c, found in Helicobacter hepaticus (strain ATCC 51449 / 3B1).